Reading from the N-terminus, the 102-residue chain is uncharacterized protein (102 aa).

Residues 1-102 form a disordered region; sequence MPVEQDGLTG…LANIREQNHQ (102 aa).

This is an uncharacterized protein from Caenorhabditis elegans.